Reading from the N-terminus, the 410-residue chain is Mating-type locus allele B5 protein (410 aa).

A variable domain between B alleles region spans residues 1 to 110 (MSSDPNFSLT…FNVVSPAVVC (110 aa)). The homeobox; TALE-type DNA-binding region spans 107-184 (AVVCRNLSED…NARRRSGWSH (78 aa)). Positions 111-410 (RNLSEDLPAY…PFLCLSVAFV (300 aa)) are highly conserved between B alleles. Disordered regions lie at residues 201–241 (VRAK…TPAD), 275–336 (NKKT…PELS), and 366–395 (ILQS…PDEV). The span at 206–222 (SSSNQSTPPSPTSEYPS) shows a compositional bias: low complexity. Positions 276-308 (KKTPKPGMPRPVTTVTKRQPARKTKPAAKPKSR) match the Nuclear localization signal motif. Basic residues predominate over residues 294–307 (QPARKTKPAAKPKS). The segment covering 312–336 (PRASTTPSIDSTLDSSKLESTPELS) has biased composition (polar residues). The tract at residues 333-410 (PELSMCSTAD…PFLCLSVAFV (78 aa)) is not essential for B5 function. Over residues 375–388 (RGNRKVKALPKRAG) the composition is skewed to basic residues.

This sequence belongs to the TALE/M-ATYP homeobox family.

The protein resides in the nucleus. In terms of biological role, the B locus has at least 25 alleles, and any combination of two different B alleles yields a multimeric regulatory protein, that activates genes responsible for the pathogenicity and for the sexual development of the fungus within the corn plant. This chain is Mating-type locus allele B5 protein, found in Mycosarcoma maydis (Corn smut fungus).